Reading from the N-terminus, the 220-residue chain is Inner kinetochore subunit fta3 (220 aa).

The protein belongs to the CENP-H/MCM16 family. Component of the inner kinetochore constitutive centromere-associated network (CCAN) (also known as central kinetochore Sim4 complex in fission yeast), which is composed of at least cnl2, cnp3, cnp20, fta1, fta2, fta3, fta4, fta6, fta7, mal2, mhf1, mhf2, mis6, mis15, mis17, sim4 and wip1.

It localises to the nucleus. It is found in the chromosome. The protein localises to the centromere. Its subcellular location is the kinetochore. Component of the kinetochore, a multiprotein complex that assembles on centromeric DNA and attaches chromosomes to spindle microtubules, mediating chromosome segregation and sister chromatid segregation during meiosis and mitosis. Component of the inner kinetochore constitutive centromere-associated network (CCAN), which serves as a structural platform for outer kinetochore assembly. Fta2, fta3 and fta4 associate with the central core (cnt) and inner repeat (inr) region of the centromere. The polypeptide is Inner kinetochore subunit fta3 (fta3) (Schizosaccharomyces pombe (strain 972 / ATCC 24843) (Fission yeast)).